Reading from the N-terminus, the 372-residue chain is Flagellar P-ring protein (372 aa).

Positions 1 to 26 (MNLSSLSFRLLATLLGACVVVAPASA) are cleaved as a signal peptide.

Belongs to the FlgI family. The basal body constitutes a major portion of the flagellar organelle and consists of four rings (L,P,S, and M) mounted on a central rod.

The protein resides in the periplasm. The protein localises to the bacterial flagellum basal body. In terms of biological role, assembles around the rod to form the L-ring and probably protects the motor/basal body from shearing forces during rotation. The polypeptide is Flagellar P-ring protein (Xanthomonas oryzae pv. oryzae (strain MAFF 311018)).